The following is a 192-amino-acid chain: Imidazoleglycerol-phosphate dehydratase (192 aa).

This sequence belongs to the imidazoleglycerol-phosphate dehydratase family.

The protein resides in the cytoplasm. The enzyme catalyses D-erythro-1-(imidazol-4-yl)glycerol 3-phosphate = 3-(imidazol-4-yl)-2-oxopropyl phosphate + H2O. It participates in amino-acid biosynthesis; L-histidine biosynthesis; L-histidine from 5-phospho-alpha-D-ribose 1-diphosphate: step 6/9. This Staphylococcus epidermidis (strain ATCC 35984 / DSM 28319 / BCRC 17069 / CCUG 31568 / BM 3577 / RP62A) protein is Imidazoleglycerol-phosphate dehydratase.